The following is a 548-amino-acid chain: Synaptic vesicle 2-related protein (548 aa).

Residues 1–87 (MEEDLFQLRQ…GFGRFQWKLS (87 aa)) are Cytoplasmic-facing. Ser25 and Ser31 each carry phosphoserine. The chain crosses the membrane as a helical span at residues 88–108 (VLTGLAWMADAMEMMILSILA). Topologically, residues 109-122 (PQLHCEWRLPSWQV) are vesicular. Residues 123 to 143 (ALLTSVVFIGMMSSSTLWGNI) form a helical membrane-spanning segment. Residues 144 to 156 (SDQYGRKTGLKIS) are Cytoplasmic-facing. A helical membrane pass occupies residues 157–177 (VFWTLYYGILSAFAPVYSWIL). The Vesicular portion of the chain corresponds to 178–180 (VLR). The chain crosses the membrane as a helical span at residues 181-201 (GLVGFGIGGVPQSVTLYAEFL). At 202-209 (PMKARAKC) the chain is on the cytoplasmic side. Residues 210 to 230 (ILLIEVFWAIGTVFEVLLAVF) form a helical membrane-spanning segment. Residues 231–238 (VMPSLGWR) are Vesicular-facing. The chain crosses the membrane as a helical span at residues 239–259 (WLLLLSAAPLLVFAVLCFWLP). Topologically, residues 260–316 (ESARYDVLSGNQEKAIATLKRIATENGAPMPLGKLIISRQEDRGKMRDLFTPHFRWT) are cytoplasmic. A helical membrane pass occupies residues 317–337 (TLLLWFIWFSNAFSYYGLVLL). The Vesicular portion of the chain corresponds to 338–373 (TTELFQAGDVCSISSRKKAVEAKCSLACEYLSKEDY). Residues 374–394 (MDLLWTTLSEFPGVLVTLWVI) traverse the membrane as a helical segment. The Cytoplasmic portion of the chain corresponds to 395 to 401 (DRLGRKK). The helical transmembrane segment at 402 to 422 (TMALCFVIFSLCSLLLFICIG) threads the bilayer. The Vesicular portion of the chain corresponds to 423 to 424 (RN). The chain crosses the membrane as a helical span at residues 425–445 (VLTLLLFIARAFISGGFQAAY). At 446 to 457 (VYTPEVYPTATR) the chain is on the cytoplasmic side. Residues 458–478 (ALGLGTCSGMARVGALITPFI) traverse the membrane as a helical segment. Topologically, residues 479–489 (AQVMLESSVYL) are vesicular. A helical transmembrane segment spans residues 490–510 (TLAVYSGCCLLAALASCFLPI). The Cytoplasmic portion of the chain corresponds to 511–548 (ETKGRALQESSHREWGQEMVGRGTNSTGVPRSNSGSQE). A disordered region spans residues 523–548 (REWGQEMVGRGTNSTGVPRSNSGSQE). The span at 533–548 (GTNSTGVPRSNSGSQE) shows a compositional bias: polar residues. Ser542 is modified (phosphoserine).

It belongs to the major facilitator superfamily. In terms of tissue distribution, detected in brain (at protein level). Detected in brain, in synaptic layers of the cerebellum, hippocampus and cerebral cortex.

It is found in the cytoplasmic vesicle. The protein resides in the secretory vesicle. Its subcellular location is the synaptic vesicle membrane. This chain is Synaptic vesicle 2-related protein (Svop), found in Rattus norvegicus (Rat).